Consider the following 555-residue polypeptide: Solute carrier family 22 member 2 (555 aa).

Topologically, residues 1–21 are cytoplasmic; sequence MPTTVDDVLEHGGEFHFFQKQ. A helical membrane pass occupies residues 22–42; the sequence is MFFLLALLSATFTPIYVGIVF. Residues 43-150 lie on the Extracellular side of the membrane; that stretch reads LGFTPDHRCR…LVCANSWMLD (108 aa). Asparagine 72 carries N-linked (GlcNAc...) asparagine glycosylation. A helical membrane pass occupies residues 151–171; the sequence is LFQASVNVGFFFGSVSIGYIA. Over 172-177 the chain is Cytoplasmic; it reads DRFGRK. A helical membrane pass occupies residues 178 to 198; it reads LCLLTTVLINAAAGVLMAISP. The Extracellular portion of the chain corresponds to 199–210; that stretch reads TYTWMLIFRLIQ. A helical membrane pass occupies residues 211-231; that stretch reads GLVSKAGWLIGYILITEFVGR. At 232 to 238 the chain is on the cytoplasmic side; that stretch reads RYRRTVG. The chain crosses the membrane as a helical span at residues 239 to 259; that stretch reads IFYQVAYTVGLLVLAGVAYAL. Topologically, residues 260-263 are extracellular; that stretch reads PHWR. A helical membrane pass occupies residues 264 to 284; sequence WLQFTVTLPNFFFLLYYWCIP. The short motif at 284–288 is the Proline-rich sequence element; that stretch reads PESPR. Residues 285–348 are Cytoplasmic-facing; the sequence is ESPRWLISQN…VRTPQIRKHT (64 aa). Residues 349–369 form a helical membrane-spanning segment; it reads MILMYNWFTSSVLYQGLIMHM. At 370–375 the chain is on the extracellular side; it reads GLAGDN. The chain crosses the membrane as a helical span at residues 376–396; sequence IYLDFFYSALVEFPAAFMIIV. At 397–404 the chain is on the cytoplasmic side; that stretch reads TIDRIGRR. Residues 405–425 form a helical membrane-spanning segment; it reads YPWAASNMVAGAACLASVFIP. The Extracellular portion of the chain corresponds to 426-432; it reads GDLQWLK. A helical transmembrane segment spans residues 433 to 453; that stretch reads IIISCLGRMGITMAYEIVRLV. At 454 to 464 the chain is on the cytoplasmic side; it reads NAELYPTFIRN. A helical membrane pass occupies residues 465–485; that stretch reads LGVHICSSMCDIGGIITPFLV. At 486–494 the chain is on the extracellular side; the sequence is YRLTNIWLE. Residues 495–515 traverse the membrane as a helical segment; that stretch reads LPLMVFGVLGLVAGGLVLLLP. Topologically, residues 516-555 are cytoplasmic; it reads ETKGKALPETIEEAENMQRPRKNKEKMIYLQVQKLDIPLN.

This sequence belongs to the major facilitator (TC 2.A.1) superfamily. Organic cation transporter (TC 2.A.1.19) family. Tyrosine phosphorylated.

The protein localises to the basolateral cell membrane. The protein resides in the basal cell membrane. It is found in the apical cell membrane. It carries out the reaction (R)-noradrenaline(out) = (R)-noradrenaline(in). It catalyses the reaction (R)-adrenaline(out) = (R)-adrenaline(in). The catalysed reaction is serotonin(out) = serotonin(in). The enzyme catalyses dopamine(out) = dopamine(in). It carries out the reaction histamine(out) = histamine(in). It catalyses the reaction thiamine(in) = thiamine(out). The catalysed reaction is creatinine(in) = creatinine(out). The enzyme catalyses 1-methylnicotinamide(out) = 1-methylnicotinamide(in). It carries out the reaction guanidine(out) = guanidine(in). It catalyses the reaction choline(out) = choline(in). The catalysed reaction is agmatine(out) = agmatine(in). The enzyme catalyses putrescine(out) = putrescine(in). It carries out the reaction spermidine(in) = spermidine(out). It catalyses the reaction tyramine(in) = tyramine(out). The catalysed reaction is L-histidyl-L-proline diketopiperazine(in) = L-histidyl-L-proline diketopiperazine(out). The enzyme catalyses (R)-salsolinol(in) = (R)-salsolinol(out). It carries out the reaction N-methyl-(R)-salsolinol(in) = N-methyl-(R)-salsolinol(out). It catalyses the reaction acetylcholine(in) = acetylcholine(out). The catalysed reaction is prostaglandin F2alpha(out) = prostaglandin F2alpha(in). The enzyme catalyses prostaglandin E2(out) = prostaglandin E2(in). Its activity is regulated as follows. Tyrosine phosphorylation of the transporter leads to activation of the transport activity. Inhibited by cGMP, most likely through a cGMP-binding protein that interacts with OCT2. Functionally, electrogenic voltage-dependent transporter that mediates the transport of a variety of organic cations such as endogenous bioactive amines, cationic drugs and xenobiotics. Functions as a Na(+)-independent, bidirectional uniporter. Cation cellular uptake or release is driven by the electrochemical potential, i.e. membrane potential and concentration gradient. However, may also engage electroneutral cation exchange when saturating concentrations of cation substrates are reached. Predominantly expressed at the basolateral membrane of hepatocytes and proximal tubules and involved in the uptake and disposition of cationic compounds by hepatic and renal clearance from the blood flow. Implicated in monoamine neurotransmitters uptake such as histamine, dopamine, adrenaline/epinephrine, noradrenaline/norepinephrine, serotonin and tyramine, thereby supporting a physiological role in the central nervous system by regulating interstitial concentrations of neurotransmitters. Also capable of transporting dopaminergic neuromodulators cyclo(his-pro), salsolinol and N-methyl-salsolinol, thereby involved in the maintenance of dopaminergic cell integrity in the central nervous system. Mediates the bidirectional transport of acetylcholine (ACh) at the apical membrane of ciliated cell in airway epithelium, thereby playing a role in luminal release of ACh from bronchial epithelium. Also transports guanidine and endogenous monoamines such as vitamin B1/thiamine, creatinine and N-1-methylnicotinamide (NMN). Mediates the uptake and efflux of quaternary ammonium compound choline. Mediates the bidirectional transport of polyamine agmatine and the uptake of polyamines putrescine and spermidine. Able to transport non-amine endogenous compounds such as prostaglandin E2 (PGE2) and prostaglandin F2-alpha (PGF2-alpha). Also involved in the uptake of xenobiotic 4-(4-(dimethylamino)styryl)-N-methylpyridinium (ASP). May contribute to regulate the transport of organic compounds in testis across the blood-testis-barrier. This Pongo abelii (Sumatran orangutan) protein is Solute carrier family 22 member 2 (SLC22A2).